The sequence spans 360 residues: MTATLERRESASLWARFCTWITMNENRLYIGWFGVVMIPTLLTATSVFIIACFAAPPVDIDGIREPVAGSLLYGNNIISGAIIPSSAAIGIHFYPIWEAASLDEWLYNGGPYQLIVLHFLLGVCCYIGREWEFSYRLGMRPWISVAFTAPVVAASAVFLVYPIGQGSFSDGMPLGISGTFNFMLVFQAEHNILMHPLHQLGVAGVFGGSLFSAMHGSLVTSSLIRETTENESANNGYKFGQEEETYNIVAAHGYFGRLIFQYASFNNSRSLHFFLGLWPVVGIWFTSMSVSTMAFNLNGFNFNQSVVDSQGRVINTWADILNRANLGMEVMHERNAHNFPLDLASNESLPLALVAPAING.

3 helical membrane-spanning segments follow: residues 29-46, 118-133, and 142-156; these read YIGW…TATS, HFLL…EWEF, and WISV…AASA. Residue histidine 118 coordinates chlorophyll a. Tyrosine 126 contributes to the pheophytin a binding site. 2 residues coordinate [CaMn4O5] cluster: aspartate 170 and glutamate 189. Residues 197–218 traverse the membrane as a helical segment; that stretch reads LHQLGVAGVFGGSLFSAMHGSL. Histidine 198 contributes to the chlorophyll a binding site. Residues histidine 215 and 264 to 265 contribute to the a quinone site; that span reads SF. Histidine 215 serves as a coordination point for Fe cation. Histidine 272 provides a ligand contact to Fe cation. Residues 274–288 traverse the membrane as a helical segment; that stretch reads FLGLWPVVGIWFTSM. Positions 332, 333, 342, and 344 each coordinate [CaMn4O5] cluster. Positions 345–360 are excised as a propeptide; the sequence is SNESLPLALVAPAING.

This sequence belongs to the reaction center PufL/M/PsbA/D family. In terms of assembly, PSII is composed of 1 copy each of membrane proteins PsbA, PsbB, PsbC, PsbD, PsbE, PsbF, PsbH, PsbI, PsbJ, PsbK, PsbL, PsbM, PsbT, PsbX, PsbY, PsbZ, Psb30/Ycf12, at least 3 peripheral proteins of the oxygen-evolving complex and a large number of cofactors. It forms dimeric complexes. The D1/D2 heterodimer binds P680, chlorophylls that are the primary electron donor of PSII, and subsequent electron acceptors. It shares a non-heme iron and each subunit binds pheophytin, quinone, additional chlorophylls, carotenoids and lipids. D1 provides most of the ligands for the Mn4-Ca-O5 cluster of the oxygen-evolving complex (OEC). There is also a Cl(-1) ion associated with D1 and D2, which is required for oxygen evolution. The PSII complex binds additional chlorophylls, carotenoids and specific lipids. is required as a cofactor. Post-translationally, tyr-161 forms a radical intermediate that is referred to as redox-active TyrZ, YZ or Y-Z. C-terminally processed by CTPA; processing is essential to allow assembly of the oxygen-evolving complex and thus photosynthetic growth.

It localises to the plastid. The protein resides in the chloroplast thylakoid membrane. It carries out the reaction 2 a plastoquinone + 4 hnu + 2 H2O = 2 a plastoquinol + O2. Functionally, photosystem II (PSII) is a light-driven water:plastoquinone oxidoreductase that uses light energy to abstract electrons from H(2)O, generating O(2) and a proton gradient subsequently used for ATP formation. It consists of a core antenna complex that captures photons, and an electron transfer chain that converts photonic excitation into a charge separation. The D1/D2 (PsbA/PsbD) reaction center heterodimer binds P680, the primary electron donor of PSII as well as several subsequent electron acceptors. The polypeptide is Photosystem II protein D1 (Antithamnion sp. (Red alga)).